The chain runs to 457 residues: ATP-dependent protease ATPase subunit HslU (457 aa).

ATP is bound by residues V21, G63 to E68, D269, E335, and R407.

The protein belongs to the ClpX chaperone family. HslU subfamily. As to quaternary structure, a double ring-shaped homohexamer of HslV is capped on each side by a ring-shaped HslU homohexamer. The assembly of the HslU/HslV complex is dependent on binding of ATP.

Its subcellular location is the cytoplasm. Its function is as follows. ATPase subunit of a proteasome-like degradation complex; this subunit has chaperone activity. The binding of ATP and its subsequent hydrolysis by HslU are essential for unfolding of protein substrates subsequently hydrolyzed by HslV. HslU recognizes the N-terminal part of its protein substrates and unfolds these before they are guided to HslV for hydrolysis. The sequence is that of ATP-dependent protease ATPase subunit HslU from Desulfotalea psychrophila (strain LSv54 / DSM 12343).